The primary structure comprises 282 residues: Bis(5'-nucleosyl)-tetraphosphatase, symmetrical (282 aa).

Belongs to the Ap4A hydrolase family.

It carries out the reaction P(1),P(4)-bis(5'-adenosyl) tetraphosphate + H2O = 2 ADP + 2 H(+). Functionally, hydrolyzes diadenosine 5',5'''-P1,P4-tetraphosphate to yield ADP. This Burkholderia mallei (strain NCTC 10247) protein is Bis(5'-nucleosyl)-tetraphosphatase, symmetrical.